Here is a 613-residue protein sequence, read N- to C-terminus: Dihydroxy-acid dehydratase (613 aa).

D81 provides a ligand contact to Mg(2+). [2Fe-2S] cluster is bound at residue C122. Residues D123 and K124 each contribute to the Mg(2+) site. K124 is modified (N6-carboxylysine). C195 provides a ligand contact to [2Fe-2S] cluster. E491 provides a ligand contact to Mg(2+). S517 acts as the Proton acceptor in catalysis.

The protein belongs to the IlvD/Edd family. As to quaternary structure, homodimer. Requires [2Fe-2S] cluster as cofactor. It depends on Mg(2+) as a cofactor.

The catalysed reaction is (2R)-2,3-dihydroxy-3-methylbutanoate = 3-methyl-2-oxobutanoate + H2O. The enzyme catalyses (2R,3R)-2,3-dihydroxy-3-methylpentanoate = (S)-3-methyl-2-oxopentanoate + H2O. It functions in the pathway amino-acid biosynthesis; L-isoleucine biosynthesis; L-isoleucine from 2-oxobutanoate: step 3/4. The protein operates within amino-acid biosynthesis; L-valine biosynthesis; L-valine from pyruvate: step 3/4. Its function is as follows. Functions in the biosynthesis of branched-chain amino acids. Catalyzes the dehydration of (2R,3R)-2,3-dihydroxy-3-methylpentanoate (2,3-dihydroxy-3-methylvalerate) into 2-oxo-3-methylpentanoate (2-oxo-3-methylvalerate) and of (2R)-2,3-dihydroxy-3-methylbutanoate (2,3-dihydroxyisovalerate) into 2-oxo-3-methylbutanoate (2-oxoisovalerate), the penultimate precursor to L-isoleucine and L-valine, respectively. This is Dihydroxy-acid dehydratase from Aeromonas hydrophila subsp. hydrophila (strain ATCC 7966 / DSM 30187 / BCRC 13018 / CCUG 14551 / JCM 1027 / KCTC 2358 / NCIMB 9240 / NCTC 8049).